Reading from the N-terminus, the 492-residue chain is NADH-ubiquinone oxidoreductase chain 4 (492 aa).

Transmembrane regions (helical) follow at residues 9-29, 36-56, 63-83, 86-106, 115-135, 136-156, 170-190, 211-231, 242-262, 269-289, 304-324, 332-352, 370-390, 410-430, and 454-474; these read LILT…IPSA, NFAL…WIQF, FQFS…TIGI, ISLF…LVSW, DYLI…SVLD, LLLF…IVGV, FFLY…NIYF, IFLW…IPFH, PTAG…YGFL, FPVA…VAII, IIAY…FSLN, ILLM…IGVL, VMPL…GFPG, TLTL…IWLF, and FWIL…PNSF.

This sequence belongs to the complex I subunit 4 family.

Its subcellular location is the mitochondrion membrane. The enzyme catalyses a ubiquinone + NADH + 5 H(+)(in) = a ubiquinol + NAD(+) + 4 H(+)(out). Core subunit of the mitochondrial membrane respiratory chain NADH dehydrogenase (Complex I) that is believed to belong to the minimal assembly required for catalysis. Complex I functions in the transfer of electrons from NADH to the respiratory chain. The immediate electron acceptor for the enzyme is believed to be ubiquinone. The protein is NADH-ubiquinone oxidoreductase chain 4 (ND4) of Chondrus crispus (Carrageen Irish moss).